The sequence spans 129 residues: Small ribosomal subunit protein uS9 (129 aa).

The interval 98-129 is disordered; it reads KAQGFLTRDPRKKERKKYGRKKARKSFQFSKR. The segment covering 110-129 has biased composition (basic residues); that stretch reads KERKKYGRKKARKSFQFSKR.

This sequence belongs to the universal ribosomal protein uS9 family.

This is Small ribosomal subunit protein uS9 from Chlamydia trachomatis serovar L2 (strain ATCC VR-902B / DSM 19102 / 434/Bu).